The primary structure comprises 108 residues: Protein phosphatase 1 regulatory subunit 1C (108 aa).

The interval 25–108 (AEQIRKRRPT…ASEREEKWNH (84 aa)) is disordered. The segment covering 45–54 (NSPEIDEKRV) has biased composition (basic and acidic residues). Over residues 55-73 (TNTQESQNASPKQRKQSVY) the composition is skewed to polar residues. The span at 99–108 (ASEREEKWNH) shows a compositional bias: basic and acidic residues.

Belongs to the protein phosphatase inhibitor 1 family.

It localises to the cytoplasm. In terms of biological role, may increase cell susceptibility to TNF-induced apoptosis. This chain is Protein phosphatase 1 regulatory subunit 1C (Ppp1r1c), found in Mus musculus (Mouse).